The sequence spans 837 residues: Probable aldehyde oxidase 4 (837 aa).

Residues 9–98 (ERVVFELNGE…FCSIITTEGL (90 aa)) enclose the 2Fe-2S ferredoxin-type domain. Cys-50, Cys-55, Cys-58, and Cys-80 together coordinate [2Fe-2S] cluster. Residues 240–427 (ISGPREGWYC…LSIFIPHWAS (188 aa)) enclose the FAD-binding PCMH-type domain.

Belongs to the xanthine dehydrogenase family. In terms of assembly, aldehyde oxidases (AO) are homodimers and heterodimers of AO subunits. Requires [2Fe-2S] cluster as cofactor. FAD serves as cofactor. Mo-molybdopterin is required as a cofactor.

The enzyme catalyses an aldehyde + O2 + H2O = a carboxylate + H2O2 + H(+). This chain is Probable aldehyde oxidase 4, found in Oryza sativa subsp. japonica (Rice).